The sequence spans 112 residues: Small ribosomal subunit protein uS11c (112 aa).

It belongs to the universal ribosomal protein uS11 family. Part of the 30S ribosomal subunit.

It localises to the plastid. This Euglena longa (Euglenophycean alga) protein is Small ribosomal subunit protein uS11c.